The primary structure comprises 827 residues: DNA-binding protein RAP1 (827 aa).

Disordered stretches follow at residues 29–128 (SAAV…PLSN), 221–268 (LQEE…KVMV), and 308–339 (QKDTSNNNNSNVNDEDNDLLTQDNNPQTADEG). A compositionally biased stretch (polar residues) spans 44–57 (ANQNEENTGATAAE). Over residues 58–72 (TSEKVDQTEVEKKDD) the composition is skewed to basic and acidic residues. Residues 92 to 107 (ATANIASTSGASVTEP) are compositionally biased toward polar residues. In terms of domain architecture, BRCT spans 121-208 (VSGPPLSNMK…SLLNMENYLV (88 aa)). The span at 227–237 (SNGVDNSNSNS) shows a compositional bias: low complexity. The span at 238 to 247 (DNKDSIRPKT) shows a compositional bias: basic and acidic residues. Polar residues predominate over residues 249–260 (IISTNTNGATED). Residues 310–319 (DTSNNNNSNV) show a composition bias toward low complexity. Positions 326 to 339 (LLTQDNNPQTADEG) are enriched in polar residues. The HTH myb-type domain maps to 355-415 (LPSHNKASFT…RFRVYLSKRL (61 aa)). A DNA-binding region (H-T-H motif) is located at residues 388–411 (YDEISHYVPNHTGNSIRHRFRVYL). At Thr-486 the chain carries Phosphothreonine. Residues 567 to 613 (QNREPEPMKNLTNRPKRPGVPTPGNYNSAAKRARNYSSQRNVQPTAN) are disordered. Residues 601 to 611 (NYSSQRNVQPT) show a composition bias toward polar residues. The activation domain stretch occupies residues 630 to 695 (SYAIPENELL…IDPDTISFPP (66 aa)). Phosphoserine is present on Ser-731.

The protein belongs to the RAP1 family. In terms of assembly, interacts (via C-terminus) with RIF1. Interacts (via C-terminus) with SIR3. Interacts (via C-terminus) with SIR4. Interacts with a GCR1 homodimer.

It is found in the nucleus. The protein resides in the chromosome. It localises to the telomere. In terms of biological role, essential regulatory protein in yeast whose DNA-binding sites are found at three types of chromosomal elements: promoters, silencers, and telomeres. RAP1 is also involved in the regulation of telomere structure, where its binding sites are found within the terminal poly[C(1-3)A] sequences. The opposite regulatory functions of RAP1 are not intrinsic to its binding sites but, instead, result from interactions with different factors at promoters and silencers. RAP1 mediates repression of the HM loci and telomeres by recruiting the SIR complex. May also target the binding of RIF1 and RIF2 to silencers and telomeres. Forms with GCR1 a transcriptional activation complex that is required for expression of glycolytic and ribosomal gene. This Saccharomyces cerevisiae (strain ATCC 204508 / S288c) (Baker's yeast) protein is DNA-binding protein RAP1 (RAP1).